A 436-amino-acid chain; its full sequence is Histidinol dehydrogenase (436 aa).

Substrate is bound by residues Ser-242, Gln-264, and His-267. 2 residues coordinate Zn(2+): Gln-264 and His-267. Catalysis depends on proton acceptor residues Glu-332 and His-333. Residues His-333, Asp-366, Glu-420, and His-425 each coordinate substrate. Residue Asp-366 participates in Zn(2+) binding. His-425 is a binding site for Zn(2+).

It belongs to the histidinol dehydrogenase family. Requires Zn(2+) as cofactor.

It catalyses the reaction L-histidinol + 2 NAD(+) + H2O = L-histidine + 2 NADH + 3 H(+). It functions in the pathway amino-acid biosynthesis; L-histidine biosynthesis; L-histidine from 5-phospho-alpha-D-ribose 1-diphosphate: step 9/9. Functionally, catalyzes the sequential NAD-dependent oxidations of L-histidinol to L-histidinaldehyde and then to L-histidine. In Nitratidesulfovibrio vulgaris (strain ATCC 29579 / DSM 644 / CCUG 34227 / NCIMB 8303 / VKM B-1760 / Hildenborough) (Desulfovibrio vulgaris), this protein is Histidinol dehydrogenase.